A 194-amino-acid polypeptide reads, in one-letter code: Thiol:disulfide interchange protein CycY (194 aa).

Residues 1–37 (MSEQSTSANPQRRTFLMVLPLIAFIGLALLFWFRLGS) form the signal peptide. One can recognise a Thioredoxin domain in the interval 46-190 (ALIGRPAPQT…LRSVLLPQME (145 aa)). The cysteines at positions 92 and 95 are disulfide-linked.

This sequence belongs to the thioredoxin family. DsbE subfamily.

The protein resides in the periplasm. Required for disulfide bond formation in some periplasmic proteins. Also acts as a disulfide oxidoreductase in cytochromes c biogenesis. The cysteines of apocytochromes c must be in the reduced state for covalent linkage between the two moieties to occur. In Bradyrhizobium diazoefficiens (strain JCM 10833 / BCRC 13528 / IAM 13628 / NBRC 14792 / USDA 110), this protein is Thiol:disulfide interchange protein CycY (cycY).